The primary structure comprises 83 residues: Three-finger toxin MALT0066C (83 aa).

An N-terminal signal peptide occupies residues 1 to 21 (MKTLLLTLVVVTIVCLDFGHT). 4 disulfides stabilise this stretch: C24-C45, C38-C62, C64-C75, and C76-C81.

This sequence belongs to the three-finger toxin family. Short-chain subfamily. Type I alpha-neurotoxin sub-subfamily. In terms of assembly, dimer. Expressed by the venom gland.

It localises to the secreted. Its function is as follows. Binds to muscle nicotinic acetylcholine receptor (nAChR) and inhibit acetylcholine from binding to the receptor, thereby impairing neuromuscular transmission. The protein is Three-finger toxin MALT0066C of Micrurus altirostris (Uruguayan coral snake).